A 224-amino-acid chain; its full sequence is Peroxiredoxin-6 (224 aa).

Positions leucine 5–leucine 169 constitute a Thioredoxin domain. The interval aspartate 31 to proline 40 is required and sufficient for targeting to lysosomes and lamellar bodies. Threonine 44 carries the phosphothreonine modification. The active-site Cysteine sulfenic acid (-SOH) intermediate; for peroxidase activity is cysteine 47. An N6-acetyllysine modification is found at lysine 63. Position 89 is a phosphotyrosine (tyrosine 89). Aspartate 140 serves as the catalytic For phospholipase activity. Threonine 177 is subject to Phosphothreonine; by MAPK. Lysine 209 carries the post-translational modification N6-acetyllysine; alternate. An N6-succinyllysine; alternate modification is found at lysine 209.

Belongs to the peroxiredoxin family. Prx6 subfamily. As to quaternary structure, homodimer. Interacts with GSTP1; mediates PRDX6 glutathionylation and regeneration. Interacts with APEX1. Interacts with STH. May interact with FAM168B. May interact with HTR2A. Irreversibly inactivated by overoxidation of Cys-47 to sulfinic acid (Cys-SO(2)H) and sulfonic acid (Cys-SO(3)H) forms upon oxidative stress. In terms of processing, phosphorylation at Thr-177 by MAP kinases increases the phospholipase activity of the enzyme. The phosphorylated form exhibits a greater lysophosphatidylcholine acyltransferase activity compared to the non-phosphorylated form.

The protein localises to the cytoplasm. It is found in the lysosome. The enzyme catalyses a hydroperoxide + 2 glutathione = an alcohol + glutathione disulfide + H2O. It catalyses the reaction a 1,2-diacyl-sn-glycero-3-phosphocholine + H2O = a 1-acyl-sn-glycero-3-phosphocholine + a fatty acid + H(+). It carries out the reaction a 1-acyl-sn-glycero-3-phosphocholine + an acyl-CoA = a 1,2-diacyl-sn-glycero-3-phosphocholine + CoA. The catalysed reaction is 1-hexadecanoyl-sn-glycero-3-phosphocholine + hexadecanoyl-CoA = 1,2-dihexadecanoyl-sn-glycero-3-phosphocholine + CoA. The enzyme catalyses 1,2-dihexadecanoyl-sn-glycero-3-phosphocholine + H2O = 1-hexadecanoyl-sn-glycero-3-phosphocholine + hexadecanoate + H(+). Its function is as follows. Thiol-specific peroxidase that catalyzes the reduction of hydrogen peroxide and organic hydroperoxides to water and alcohols, respectively. Can reduce H(2)O(2) and short chain organic, fatty acid, and phospholipid hydroperoxides. Also has phospholipase activity, and can therefore either reduce the oxidized sn-2 fatty acyl group of phospholipids (peroxidase activity) or hydrolyze the sn-2 ester bond of phospholipids (phospholipase activity). These activities are dependent on binding to phospholipids at acidic pH and to oxidized phospholipds at cytosolic pH. Plays a role in cell protection against oxidative stress by detoxifying peroxides and in phospholipid homeostasis. Exhibits acyl-CoA-dependent lysophospholipid acyltransferase which mediates the conversion of lysophosphatidylcholine (1-acyl-sn-glycero-3-phosphocholine or LPC) into phosphatidylcholine (1,2-diacyl-sn-glycero-3-phosphocholine or PC). Shows a clear preference for LPC as the lysophospholipid and for palmitoyl CoA as the fatty acyl substrate. The chain is Peroxiredoxin-6 (PRDX6) from Macaca fascicularis (Crab-eating macaque).